A 385-amino-acid polypeptide reads, in one-letter code: Lipid-A-disaccharide synthase (385 aa).

Belongs to the LpxB family.

It catalyses the reaction a lipid X + a UDP-2-N,3-O-bis[(3R)-3-hydroxyacyl]-alpha-D-glucosamine = a lipid A disaccharide + UDP + H(+). It participates in bacterial outer membrane biogenesis; LPS lipid A biosynthesis. In terms of biological role, condensation of UDP-2,3-diacylglucosamine and 2,3-diacylglucosamine-1-phosphate to form lipid A disaccharide, a precursor of lipid A, a phosphorylated glycolipid that anchors the lipopolysaccharide to the outer membrane of the cell. In Pseudoalteromonas translucida (strain TAC 125), this protein is Lipid-A-disaccharide synthase.